The primary structure comprises 193 residues: Holliday junction branch migration complex subunit RuvA (193 aa).

Positions M1–A63 are domain I. The segment at E64–V142 is domain II. Residues S143–S145 form a flexible linker region. Residues S145–L193 are domain III.

The protein belongs to the RuvA family. As to quaternary structure, homotetramer. Forms an RuvA(8)-RuvB(12)-Holliday junction (HJ) complex. HJ DNA is sandwiched between 2 RuvA tetramers; dsDNA enters through RuvA and exits via RuvB. An RuvB hexamer assembles on each DNA strand where it exits the tetramer. Each RuvB hexamer is contacted by two RuvA subunits (via domain III) on 2 adjacent RuvB subunits; this complex drives branch migration. In the full resolvosome a probable DNA-RuvA(4)-RuvB(12)-RuvC(2) complex forms which resolves the HJ.

It localises to the cytoplasm. The RuvA-RuvB-RuvC complex processes Holliday junction (HJ) DNA during genetic recombination and DNA repair, while the RuvA-RuvB complex plays an important role in the rescue of blocked DNA replication forks via replication fork reversal (RFR). RuvA specifically binds to HJ cruciform DNA, conferring on it an open structure. The RuvB hexamer acts as an ATP-dependent pump, pulling dsDNA into and through the RuvAB complex. HJ branch migration allows RuvC to scan DNA until it finds its consensus sequence, where it cleaves and resolves the cruciform DNA. This Christiangramia forsetii (strain DSM 17595 / CGMCC 1.15422 / KT0803) (Gramella forsetii) protein is Holliday junction branch migration complex subunit RuvA.